A 473-amino-acid chain; its full sequence is Cannabinoid receptor 1 (473 aa).

Residues 1–117 (MKSILDGLAD…CFMILNPSQQ (117 aa)) lie on the Extracellular side of the membrane. The interval 2-23 (KSILDGLADTTFRTITTDLLYV) is required for mitochondrial localization. N-linked (GlcNAc...) asparagine glycosylation is found at N78 and N84. The chain crosses the membrane as a helical span at residues 118–143 (LAIAVLSLTLGTFTVLENLLVLCVIL). The Cytoplasmic portion of the chain corresponds to 144 to 155 (HSRSLRCRPSYH). Residues 156-176 (FIGSLAVADLLGSVIFVYSFV) form a helical membrane-spanning segment. Residues 177–188 (DFHVFHRKDSPN) lie on the Extracellular side of the membrane. Residues 189–213 (VFLFKLGGVTASFTASVGSLFLTAI) traverse the membrane as a helical segment. Residues 214–233 (DRYISIHRPLAYKRIVTRPK) lie on the Cytoplasmic side of the membrane. A helical transmembrane segment spans residues 234-256 (AVVAFCLMWTIAIVIAVLPLLGW). Residues 257–274 (NCKKLQSVCSDIFPLIDE) lie on the Extracellular side of the membrane. Residues 275-300 (TYLMFWIGVTSVLLLFIVYAYMYILW) traverse the membrane as a helical segment. Residues 301-345 (KAHSHAVRMIQRGTQKSIIIHTSEDGKVQVTRPDQARMDIRLAKT) lie on the Cytoplasmic side of the membrane. The helical transmembrane segment at 346–366 (LVLILVVLIICWGPLLAIMVY) threads the bilayer. At 367-378 (DVFGKMNKLIKT) the chain is on the extracellular side. Residues 379–400 (VFAFCSMLCLLNSTVNPIIYAL) traverse the membrane as a helical segment. The Cytoplasmic portion of the chain corresponds to 401–473 (RSKDLRHAFR…VSTDTSAEAL (73 aa)). C416 is lipidated: S-palmitoyl cysteine. Phosphoserine is present on residues S426 and S430.

This sequence belongs to the G-protein coupled receptor 1 family. Interacts (via C-terminus) with CNRIP1. Associates with G protein alpha subunits, including G(i) alpha-1/GNAI1, G(i) alpha-3/GNAI3 and G(o)-alpha/GNAO1; palmitoylation is important for interaction with GNAI3 and GNAO1. In terms of processing, palmitoylation at Cys-416 is important for recruitment at both plasma membrane and lipid rafts and association with G protein alpha subunits. Expressed in the brain, in the striatum, medial septum, descending arm of the band of Broca, the amygdaloid nucleus, the hippocampus and cortex (at protein level). High levels in the lateral striatum. In rostral brain regions, high expression levels in the dorsal lateral striatum, while in the caudal brain regions, high levels are observed in the ventral lateral striatum. Expressed in monocytes/macrophages (at protein level). Expressed in striated muscles and in vascular smooth muscles cells (at protein level).

It is found in the cell membrane. Its subcellular location is the mitochondrion outer membrane. It localises to the cell projection. The protein localises to the axon. The protein resides in the presynapse. Hemopressin, a peptide derived from hemoglobin subunit alpha (HBA1 and/or HBA2), acts as an antagonist peptide: hemopressin-binding efficiently blocks cannabinoid receptor CNR1 and subsequent signaling. Its function is as follows. G-protein coupled receptor for cannabinoids, including endocannabinoids (eCBs), such as N-arachidonoylethanolamide (also called anandamide or AEA) and 2-arachidonoylglycerol (2-AG). Mediates many cannabinoid-induced effects, acting, among others, on food intake, memory loss, gastrointestinal motility, catalepsy, ambulatory activity, anxiety, chronic pain. Signaling typically involves reduction in cyclic AMP. In the hypothalamus, may have a dual effect on mitochondrial respiration depending upon the agonist dose and possibly upon the cell type. Increases respiration at low doses, while decreases respiration at high doses. At high doses, CNR1 signal transduction involves G-protein alpha-i protein activation and subsequent inhibition of mitochondrial soluble adenylate cyclase, decrease in cyclic AMP concentration, inhibition of protein kinase A (PKA)-dependent phosphorylation of specific subunits of the mitochondrial electron transport system, including NDUFS2. In the hypothalamus, inhibits leptin-induced reactive oxygen species (ROS) formation and mediates cannabinoid-induced increase in SREBF1 and FASN gene expression. In response to cannabinoids, drives the release of orexigenic beta-endorphin, but not that of melanocyte-stimulating hormone alpha/alpha-MSH, from hypothalamic POMC neurons, hence promoting food intake. In the hippocampus, regulates cellular respiration and energy production in response to cannabinoids. Involved in cannabinoid-dependent depolarization-induced suppression of inhibition (DSI), a process in which depolarization of CA1 postsynaptic pyramidal neurons mobilizes eCBs, which retrogradely activate presynaptic CB1 receptors, transiently decreasing GABAergic inhibitory neurotransmission. Also reduces excitatory synaptic transmission. In superior cervical ganglions and cerebral vascular smooth muscle cells, inhibits voltage-gated Ca(2+) channels in a constitutive, as well as agonist-dependent manner. Induces leptin production in adipocytes and reduces LRP2-mediated leptin clearance in the kidney, hence participating in hyperleptinemia. In adipose tissue, CNR1 signaling leads to increased expression of SREBF1, ACACA and FASN genes. In the liver, activation by endocannabinoids leads to increased de novo lipogenesis and reduced fatty acid catabolism, associated with increased expression of SREBF1/SREBP-1, GCK, ACACA, ACACB and FASN genes. May also affect de novo cholesterol synthesis and HDL-cholesteryl ether uptake. Peripherally modulates energy metabolism. In high carbohydrate diet-induced obesity, may decrease the expression of mitochondrial dihydrolipoyl dehydrogenase/DLD in striated muscles, as well as that of selected glucose/ pyruvate metabolic enzymes, hence affecting energy expenditure through mitochondrial metabolism. In response to cannabinoid anandamide, elicits a pro-inflammatory response in macrophages, which involves NLRP3 inflammasome activation and IL1B and IL18 secretion. In macrophages infiltrating pancreatic islets, this process may participate in the progression of type-2 diabetes and associated loss of pancreatic beta-cells. The sequence is that of Cannabinoid receptor 1 (Cnr1) from Rattus norvegicus (Rat).